A 537-amino-acid chain; its full sequence is Interleukin-2 receptor subunit beta (537 aa).

Positions 1-26 are cleaved as a signal peptide; that stretch reads MATVDLSWRLPLYILLLLLATTWVSA. Over 27–239 the chain is Extracellular; the sequence is AVNDCSHLKC…FRTRPADPKE (213 aa). Cys36 and Cys46 are oxidised to a cystine. Residues Asn43, Asn55, and Asn71 are each glycosylated (N-linked (GlcNAc...) asparagine). Cys74 and Cys86 are disulfide-bonded. A Fibronectin type-III domain is found at 135-235; the sequence is APHSLQVLHI…QPMAFRTRPA (101 aa). The N-linked (GlcNAc...) asparagine glycan is linked to Asn150. The WSXWS motif motif lies at 221–225; it reads WSPWS. The helical transmembrane segment at 240–267 threads the bilayer; that stretch reads IFPLPWLRCLLLVLGCFFGFLSCVCVLV. The Cytoplasmic portion of the chain corresponds to 268–537; that stretch reads KCRYLGPWLK…LQAQDSAHLI (270 aa). The Box 1 motif signature appears at 280–288; sequence LKCHIPDPS. Disordered stretches follow at residues 442 to 466 and 479 to 498; these read AYGNSITPEERPPLSLQEGLPSLAS and ELGDDGEGMSTNSSGQQASV. The span at 487 to 497 shows a compositional bias: polar residues; sequence MSTNSSGQQAS.

This sequence belongs to the type I cytokine receptor family. Type 4 subfamily. As to quaternary structure, non-covalent dimer of an alpha and a beta subunit. IL2R exists in 3 different forms: a high affinity dimer, an intermediate affinity monomer (beta subunit), and a low affinity monomer (alpha subunit). The high and intermediate affinity forms also associate with a gamma subunit. Interacts with SHB upon interleukin stimulation.

The protein localises to the cell membrane. The protein resides in the cell surface. Functionally, receptor for interleukin-2. This beta subunit is involved in receptor mediated endocytosis and transduces the mitogenic signals of IL2. Probably in association with IL15RA, involved in the stimulation of neutrophil phagocytosis by IL15. The polypeptide is Interleukin-2 receptor subunit beta (Il2rb) (Rattus norvegicus (Rat)).